A 206-amino-acid polypeptide reads, in one-letter code: Outer-membrane lipoprotein carrier protein (206 aa).

The signal sequence occupies residues 1–21 (MKKLLCAVLLSPLLYSNAVLA).

Belongs to the LolA family. As to quaternary structure, monomer.

It localises to the periplasm. In terms of biological role, participates in the translocation of lipoproteins from the inner membrane to the outer membrane. Only forms a complex with a lipoprotein if the residue after the N-terminal Cys is not an aspartate (The Asp acts as a targeting signal to indicate that the lipoprotein should stay in the inner membrane). This Shewanella oneidensis (strain ATCC 700550 / JCM 31522 / CIP 106686 / LMG 19005 / NCIMB 14063 / MR-1) protein is Outer-membrane lipoprotein carrier protein.